Reading from the N-terminus, the 120-residue chain is Large ribosomal subunit protein uL14 (120 aa).

It belongs to the universal ribosomal protein uL14 family. Part of the 50S ribosomal subunit. Forms a cluster with proteins L3 and L19. In the 70S ribosome, L14 and L19 interact and together make contacts with the 16S rRNA in bridges B5 and B8.

Binds to 23S rRNA. Forms part of two intersubunit bridges in the 70S ribosome. The polypeptide is Large ribosomal subunit protein uL14 (Phytoplasma australiense).